A 61-amino-acid polypeptide reads, in one-letter code: Photosystem II reaction center protein K (61 aa).

Residues 1–24 (MLNIFSLICICLNSALYSSSLFFA) constitute a propeptide that is removed on maturation. A helical membrane pass occupies residues 40–60 (MPVIPLFFFLLAFVWQAAVSF).

The protein belongs to the PsbK family. As to quaternary structure, PSII is composed of 1 copy each of membrane proteins PsbA, PsbB, PsbC, PsbD, PsbE, PsbF, PsbH, PsbI, PsbJ, PsbK, PsbL, PsbM, PsbT, PsbX, PsbY, PsbZ, Psb30/Ycf12, at least 3 peripheral proteins of the oxygen-evolving complex and a large number of cofactors. It forms dimeric complexes.

Its subcellular location is the plastid. It is found in the chloroplast thylakoid membrane. Its function is as follows. One of the components of the core complex of photosystem II (PSII). PSII is a light-driven water:plastoquinone oxidoreductase that uses light energy to abstract electrons from H(2)O, generating O(2) and a proton gradient subsequently used for ATP formation. It consists of a core antenna complex that captures photons, and an electron transfer chain that converts photonic excitation into a charge separation. The protein is Photosystem II reaction center protein K of Panax ginseng (Korean ginseng).